Here is a 245-residue protein sequence, read N- to C-terminus: 1-(5-phosphoribosyl)-5-[(5-phosphoribosylamino)methylideneamino] imidazole-4-carboxamide isomerase (245 aa).

Aspartate 11 (proton acceptor) is an active-site residue. Aspartate 132 functions as the Proton donor in the catalytic mechanism.

It belongs to the HisA/HisF family.

The protein resides in the cytoplasm. The catalysed reaction is 1-(5-phospho-beta-D-ribosyl)-5-[(5-phospho-beta-D-ribosylamino)methylideneamino]imidazole-4-carboxamide = 5-[(5-phospho-1-deoxy-D-ribulos-1-ylimino)methylamino]-1-(5-phospho-beta-D-ribosyl)imidazole-4-carboxamide. The protein operates within amino-acid biosynthesis; L-histidine biosynthesis; L-histidine from 5-phospho-alpha-D-ribose 1-diphosphate: step 4/9. The chain is 1-(5-phosphoribosyl)-5-[(5-phosphoribosylamino)methylideneamino] imidazole-4-carboxamide isomerase from Bacillus licheniformis (strain ATCC 14580 / DSM 13 / JCM 2505 / CCUG 7422 / NBRC 12200 / NCIMB 9375 / NCTC 10341 / NRRL NRS-1264 / Gibson 46).